The sequence spans 449 residues: Interferon-related developmental regulator 1 (449 aa).

Basic residues predominate over residues 1–10 (MPKNKKRNAP). Positions 1–41 (MPKNKKRNAPHRGGGGGGGSGAATSAATTGGPHRTVQPFSD) are disordered. The segment covering 12-21 (RGGGGGGGSG) has biased composition (gly residues). Over residues 22-31 (AATSAATTGG) the composition is skewed to low complexity.

Belongs to the IFRD family. Interacts with PSIP1/LEDGF. Expressed at high levels in the embryonic brain in the period related to neuroblast proliferation and differentiation.

The protein resides in the cytoplasm. It is found in the cell membrane. The protein localises to the nucleus. Its function is as follows. Probably participates in neurogenesis. Could play a role in regulating gene activity in the proliferative and/or differentiative pathways induced by NGF. The chain is Interferon-related developmental regulator 1 (Ifrd1) from Rattus norvegicus (Rat).